Consider the following 160-residue polypeptide: Cyclic pyranopterin monophosphate synthase (160 aa).

Residues 74–76 and 112–113 each bind substrate; these read LSH and ME. Residue Asp-127 is part of the active site.

It belongs to the MoaC family. As to quaternary structure, homohexamer; trimer of dimers.

The enzyme catalyses (8S)-3',8-cyclo-7,8-dihydroguanosine 5'-triphosphate = cyclic pyranopterin phosphate + diphosphate. Its pathway is cofactor biosynthesis; molybdopterin biosynthesis. Its function is as follows. Catalyzes the conversion of (8S)-3',8-cyclo-7,8-dihydroguanosine 5'-triphosphate to cyclic pyranopterin monophosphate (cPMP). The chain is Cyclic pyranopterin monophosphate synthase from Pelobacter propionicus (strain DSM 2379 / NBRC 103807 / OttBd1).